Consider the following 371-residue polypeptide: UDP-N-acetylglucosamine--N-acetylmuramyl-(pentapeptide) pyrophosphoryl-undecaprenol N-acetylglucosamine transferase (371 aa).

UDP-N-acetyl-alpha-D-glucosamine is bound by residues 10–12, Asn122, Arg166, Ser196, and Gln301; that span reads TGG.

It belongs to the glycosyltransferase 28 family. MurG subfamily.

It is found in the cell inner membrane. The enzyme catalyses di-trans,octa-cis-undecaprenyl diphospho-N-acetyl-alpha-D-muramoyl-L-alanyl-D-glutamyl-meso-2,6-diaminopimeloyl-D-alanyl-D-alanine + UDP-N-acetyl-alpha-D-glucosamine = di-trans,octa-cis-undecaprenyl diphospho-[N-acetyl-alpha-D-glucosaminyl-(1-&gt;4)]-N-acetyl-alpha-D-muramoyl-L-alanyl-D-glutamyl-meso-2,6-diaminopimeloyl-D-alanyl-D-alanine + UDP + H(+). It participates in cell wall biogenesis; peptidoglycan biosynthesis. Functionally, cell wall formation. Catalyzes the transfer of a GlcNAc subunit on undecaprenyl-pyrophosphoryl-MurNAc-pentapeptide (lipid intermediate I) to form undecaprenyl-pyrophosphoryl-MurNAc-(pentapeptide)GlcNAc (lipid intermediate II). This is UDP-N-acetylglucosamine--N-acetylmuramyl-(pentapeptide) pyrophosphoryl-undecaprenol N-acetylglucosamine transferase from Halothermothrix orenii (strain H 168 / OCM 544 / DSM 9562).